Here is a 386-residue protein sequence, read N- to C-terminus: Agamous-like MADS-box protein AGL103 (386 aa).

Residues 29 to 76 form the MADS-box domain; that stretch reads SSSRATSLIKRQQTVFKKAKELSILCDIDVCVICYGSNGELKTWPEER.

As to quaternary structure, interacts with MEE14/CBP1.

The protein localises to the nucleus. Its function is as follows. Probable transcription factor that may function in the maintenance of the proper function of the central cell in pollen tube attraction. This chain is Agamous-like MADS-box protein AGL103, found in Arabidopsis thaliana (Mouse-ear cress).